A 611-amino-acid chain; its full sequence is MFS siderochrome iron transporter C (611 aa).

The disordered stretch occupies residues Met-1 to Glu-25. Asn-62 carries N-linked (GlcNAc...) asparagine glycosylation. Transmembrane regions (helical) follow at residues Val-71 to Val-91, Leu-107 to Ala-127, Phe-136 to Ser-156, Ala-165 to Ala-185, Ala-194 to Ile-214, Tyr-228 to Leu-248, Met-282 to Ala-302, Ser-313 to Ser-333, Ala-353 to Pro-373, Val-393 to Lys-413, Tyr-418 to Val-438, Ile-449 to Leu-469, Met-486 to Trp-506, and Leu-560 to Asp-580. The disordered stretch occupies residues Val-592–Thr-611.

This sequence belongs to the major facilitator superfamily.

The protein localises to the membrane. Functionally, major facilitator transporter that contributes to the maintenance of intracellular siderophore ferricrocin (FC) levels. Plays a role in conidiation and confers protection against oxidative stress. Also contributes to fungal virulence in the Galleria mellonella animal model system. Does not appear to play a role in either siderophore export or uptake. The protein is MFS siderochrome iron transporter C of Aspergillus fumigatus (strain ATCC MYA-4609 / CBS 101355 / FGSC A1100 / Af293) (Neosartorya fumigata).